The following is a 505-amino-acid chain: Putative pentatricopeptide repeat-containing protein At1g26500 (505 aa).

PPR repeat units follow at residues N145–Y179, N180–F210, D214–V248, D249–K279, D285–V319, D320–P350, and D351–P385.

This sequence belongs to the PPR family. P subfamily.

This is Putative pentatricopeptide repeat-containing protein At1g26500 from Arabidopsis thaliana (Mouse-ear cress).